Consider the following 354-residue polypeptide: G-protein coupled receptor homolog US28 (354 aa).

Residues 1–37 (MTPTTTTAELTTEFDYDEDATPCVFTDVLNQSKPVTL) lie on the Extracellular side of the membrane. Residue N30 is glycosylated (N-linked (GlcNAc...) asparagine; by host). The chain crosses the membrane as a helical span at residues 38–58 (FLYGVVFLFGSIGNFLVIFTI). Over 59-69 (TWRRRIQCSGD) the chain is Cytoplasmic. Residues 70-90 (VYFINLAAADLLFVCTLPLWM) traverse the membrane as a helical segment. Topologically, residues 91–101 (QYLLDHNSLAS) are extracellular. The helical transmembrane segment at 102–122 (VPCTLLTACFYVAMFASLCFI) threads the bilayer. Residues 123–145 (TEIALDRYYAIVYMRYRPVKQAC) are Cytoplasmic-facing. A helical transmembrane segment spans residues 146-166 (LFSIFWWIFAVIIAIPHFMVV). At 167–183 (TKKDNQCMTDYDYLEVS) the chain is on the extracellular side. The chain crosses the membrane as a helical span at residues 184-204 (YPIILNVELMLGAFVIPLSVI). The Cytoplasmic portion of the chain corresponds to 205 to 228 (SYCYYRISRIVAVSQSRHKGRIVR). The helical transmembrane segment at 229 to 249 (VLIAVVLVFIIFWLPYHLTLF) threads the bilayer. The Extracellular portion of the chain corresponds to 250-273 (VDTLKLLKWISSSCEFERSLKRAL). Residues 274–294 (ILTESLAFCHCCLNPLLYVFV) form a helical membrane-spanning segment. The Cytoplasmic portion of the chain corresponds to 295 to 354 (GTKFRQELHCLLAEFRQRLFSRDVSWYHSMSFSRRSSPSRRETSSDTLSDEVCRVSQIIP).

Belongs to the G-protein coupled receptor 1 family. Interacts with host GPRASP1; this interaction targets US28 to lysosomes for degradation. Interacts with host CX3CL1/Fractalkine (via N-terminus). Interacts with host Gi alpha-1 subunit GNAI1; this interaction does not lead to the catalytic activation of Gi complex. In terms of processing, phosphorylated. High phosphorylation occurs concomitantly with receptor endocytosis and correlate with low receptor presence at the plasma membrane.

Its subcellular location is the host cell membrane. In terms of biological role, binds to a great number of different CC-chemokines including CCL5/RANTES, CCL2/MCP-1, CCL3/MIP-1-alpha as well as CX3CL1/Fractalkine. Transduces signals resulting in the activation of MAP kinase signaling pathways and augmentation of intracellular calcium ion levels, leading to alterations in chemotactic behavior of vascular smooth muscle cells and macrophages. The US28 receptor also exhibits high levels of agonist-independent signaling activity and agonist-independent endocytosis. Interacts with the host Gi complex without activating it, thereby probably interfering with the chemokine-Gi signaling. May also function as a G protein sink to sequester G protein from the cell surface via internalization. Interacts with endogenous Gaq/11 subunits and thereby constitutively activates phospholipase C. This Homo sapiens (Human) protein is G-protein coupled receptor homolog US28 (US28).